We begin with the raw amino-acid sequence, 141 residues long: Putative nickel-responsive regulator (141 aa).

The Ni(2+) site is built by histidine 80, histidine 91, histidine 93, and cysteine 99.

The protein belongs to the transcriptional regulatory CopG/NikR family. It depends on Ni(2+) as a cofactor.

Its function is as follows. Transcriptional regulator. The polypeptide is Putative nickel-responsive regulator (Methanococcus maripaludis (strain C5 / ATCC BAA-1333)).